The primary structure comprises 519 residues: Signal transduction histidine-protein kinase/phosphatase MprB (519 aa).

Residues 1–26 are Cytoplasmic-facing; that stretch reads MVRFAWRRRASLRATSSLSLRWRVML. The chain crosses the membrane as a helical span at residues 27–47; sequence LAMSMVAMVVVLMAFAVYVVI. At 48-163 the chain is on the extracellular side; the sequence is SAALYSDIDN…PTEAVMTKLR (116 aa). A helical membrane pass occupies residues 164–184; it reads WVLLIVGSLGVAVAAVAGGMV. At 185-519 the chain is on the cytoplasmic side; that stretch reads TRAGLRPVGR…SVDYQSARAR (335 aa). Positions 186 to 238 constitute an HAMP domain; that stretch reads RAGLRPVGRLTEAAERVARTDDLRPIPVFGSDELARLTEAFNLMLRALAESRE. Residues 246 to 466 form the Histidine kinase domain; that stretch reads DAGHELRTPL…SIYVLLPGRP (221 aa). Position 249 is a phosphohistidine; by autocatalysis (histidine 249).

It depends on Mg(2+) as a cofactor. Requires Mn(2+) as cofactor. Post-translationally, autophosphorylated.

The protein resides in the cell membrane. The catalysed reaction is ATP + protein L-histidine = ADP + protein N-phospho-L-histidine.. Member of the two-component regulatory system MprB/MprA which contributes to maintaining a balance among several systems involved in stress resistance and is required for establishment and maintenance of persistent infection in the host. In response to environmental signals MprB acts both as a membrane-associated protein kinase that undergoes autophosphorylation and subsequently transfers the phosphate to MprA, and a protein phosphatase that dephosphorylates phospho-MprA. This is Signal transduction histidine-protein kinase/phosphatase MprB (mprB) from Mycobacterium leprae (strain TN).